Here is a 205-residue protein sequence, read N- to C-terminus: Ribosomal RNA small subunit methyltransferase G (205 aa).

S-adenosyl-L-methionine contacts are provided by residues glycine 76, leucine 81, 127 to 128 (IE), and arginine 140.

The protein belongs to the methyltransferase superfamily. RNA methyltransferase RsmG family.

Its subcellular location is the cytoplasm. The catalysed reaction is guanosine(527) in 16S rRNA + S-adenosyl-L-methionine = N(7)-methylguanosine(527) in 16S rRNA + S-adenosyl-L-homocysteine. Functionally, specifically methylates the N7 position of guanine in position 527 of 16S rRNA. This is Ribosomal RNA small subunit methyltransferase G from Francisella tularensis subsp. tularensis (strain FSC 198).